Consider the following 192-residue polypeptide: Thymidine kinase (192 aa).

ATP-binding positions include 9-16 and 87-90; these read ASMNAGKS and DEAQ. E88 (proton acceptor) is an active-site residue. Residues C145, C147, C182, and H185 each contribute to the Zn(2+) site.

It belongs to the thymidine kinase family. Homotetramer.

The protein localises to the cytoplasm. The catalysed reaction is thymidine + ATP = dTMP + ADP + H(+). The polypeptide is Thymidine kinase (Novosphingobium aromaticivorans (strain ATCC 700278 / DSM 12444 / CCUG 56034 / CIP 105152 / NBRC 16084 / F199)).